Reading from the N-terminus, the 156-residue chain is Ecotin (156 aa).

A signal peptide spans 1 to 19 (MKALLIAAGVAALSSTAMA). The cysteines at positions 65 and 102 are disulfide-linked.

Belongs to the protease inhibitor I11 (ecotin) family. As to quaternary structure, homodimer.

It localises to the periplasm. General inhibitor of family S1 serine proteases. This is Ecotin from Pseudomonas aeruginosa (strain UCBPP-PA14).